A 122-amino-acid chain; its full sequence is Large ribosomal subunit protein uL14 (122 aa).

The protein belongs to the universal ribosomal protein uL14 family. As to quaternary structure, part of the 50S ribosomal subunit. Forms a cluster with proteins L3 and L19. In the 70S ribosome, L14 and L19 interact and together make contacts with the 16S rRNA in bridges B5 and B8.

In terms of biological role, binds to 23S rRNA. Forms part of two intersubunit bridges in the 70S ribosome. The chain is Large ribosomal subunit protein uL14 from Xylella fastidiosa (strain 9a5c).